We begin with the raw amino-acid sequence, 54 residues long: ATP synthase protein 8 (54 aa).

Residues 13–32 form a helical membrane-spanning segment; that stretch reads ITFTFVIITLMVYILSKYIL.

It belongs to the ATPase protein 8 family. In terms of assembly, F-type ATPases have 2 components, CF(1) - the catalytic core - and CF(0) - the membrane proton channel.

Its subcellular location is the mitochondrion membrane. Mitochondrial membrane ATP synthase (F(1)F(0) ATP synthase or Complex V) produces ATP from ADP in the presence of a proton gradient across the membrane which is generated by electron transport complexes of the respiratory chain. F-type ATPases consist of two structural domains, F(1) - containing the extramembraneous catalytic core and F(0) - containing the membrane proton channel, linked together by a central stalk and a peripheral stalk. During catalysis, ATP synthesis in the catalytic domain of F(1) is coupled via a rotary mechanism of the central stalk subunits to proton translocation. Part of the complex F(0) domain. Minor subunit located with subunit a in the membrane. The sequence is that of ATP synthase protein 8 (atp-8) from Neurospora crassa (strain ATCC 24698 / 74-OR23-1A / CBS 708.71 / DSM 1257 / FGSC 987).